Reading from the N-terminus, the 314-residue chain is Probable 5-dehydro-4-deoxyglucarate dehydratase (314 aa).

The protein belongs to the DapA family.

It catalyses the reaction 5-dehydro-4-deoxy-D-glucarate + H(+) = 2,5-dioxopentanoate + CO2 + H2O. The protein operates within carbohydrate acid metabolism; D-glucarate degradation; 2,5-dioxopentanoate from D-glucarate: step 2/2. The protein is Probable 5-dehydro-4-deoxyglucarate dehydratase of Bradyrhizobium diazoefficiens (strain JCM 10833 / BCRC 13528 / IAM 13628 / NBRC 14792 / USDA 110).